The sequence spans 72 residues: Metallothionein-like protein type 2 A (72 aa).

This sequence belongs to the metallothionein superfamily. Type 15 family. As to expression, leaves and roots.

In terms of biological role, metallothioneins have a high content of cysteine residues that bind various heavy metals. This chain is Metallothionein-like protein type 2 A (MTA), found in Solanum lycopersicum (Tomato).